We begin with the raw amino-acid sequence, 196 residues long: ATP-dependent Clp protease proteolytic subunit (196 aa).

Catalysis depends on serine 101, which acts as the Nucleophile. Histidine 126 is a catalytic residue.

It belongs to the peptidase S14 family. In terms of assembly, component of the chloroplastic Clp protease core complex.

The protein resides in the plastid. Its subcellular location is the chloroplast stroma. It catalyses the reaction Hydrolysis of proteins to small peptides in the presence of ATP and magnesium. alpha-casein is the usual test substrate. In the absence of ATP, only oligopeptides shorter than five residues are hydrolyzed (such as succinyl-Leu-Tyr-|-NHMec, and Leu-Tyr-Leu-|-Tyr-Trp, in which cleavage of the -Tyr-|-Leu- and -Tyr-|-Trp bonds also occurs).. Functionally, cleaves peptides in various proteins in a process that requires ATP hydrolysis. Has a chymotrypsin-like activity. Plays a major role in the degradation of misfolded proteins. In Panax ginseng (Korean ginseng), this protein is ATP-dependent Clp protease proteolytic subunit.